Reading from the N-terminus, the 134-residue chain is ATP synthase epsilon chain (134 aa).

The protein belongs to the ATPase epsilon chain family. In terms of assembly, F-type ATPases have 2 components, CF(1) - the catalytic core - and CF(0) - the membrane proton channel. CF(1) has five subunits: alpha(3), beta(3), gamma(1), delta(1), epsilon(1). CF(0) has three main subunits: a, b and c.

The protein resides in the cell inner membrane. In terms of biological role, produces ATP from ADP in the presence of a proton gradient across the membrane. In Rhizobium meliloti (strain 1021) (Ensifer meliloti), this protein is ATP synthase epsilon chain.